We begin with the raw amino-acid sequence, 509 residues long: Probable malate:quinone oxidoreductase (509 aa).

Positions 490–509 (LGLNEKEPVSGASEKELVYS) are disordered. Positions 493 to 509 (NEKEPVSGASEKELVYS) are enriched in basic and acidic residues.

This sequence belongs to the MQO family. The cofactor is FAD.

It catalyses the reaction (S)-malate + a quinone = a quinol + oxaloacetate. It participates in carbohydrate metabolism; tricarboxylic acid cycle; oxaloacetate from (S)-malate (quinone route): step 1/1. The protein is Probable malate:quinone oxidoreductase of Geobacillus sp. (strain WCH70).